A 278-amino-acid polypeptide reads, in one-letter code: Sulfur carrier protein FdhD (278 aa).

The active-site Cysteine persulfide intermediate is Cys121. 260–265 (FCKPGR) is a binding site for Mo-bis(molybdopterin guanine dinucleotide).

It belongs to the FdhD family.

The protein localises to the cytoplasm. Required for formate dehydrogenase (FDH) activity. Acts as a sulfur carrier protein that transfers sulfur from IscS to the molybdenum cofactor prior to its insertion into FDH. The polypeptide is Sulfur carrier protein FdhD (Salmonella heidelberg (strain SL476)).